A 292-amino-acid chain; its full sequence is High-affinity heme uptake system protein IsdE (292 aa).

The first 19 residues, 1–19, serve as a signal peptide directing secretion; sequence MRIIKYLTILVISVVILTS. Cysteine 20 carries the N-palmitoyl cysteine lipid modification. Cysteine 20 is lipidated: S-diacylglycerol cysteine. Residues 35 to 291 form the Fe/B12 periplasmic-binding domain; sequence RIVPTTVALT…QLYDLFYKDK (257 aa). Residues valine 41, alanine 42, serine 60, tyrosine 61, methionine 78, and histidine 229 each contribute to the heme site.

It belongs to the bacterial solute-binding protein 8 family. Heme b serves as cofactor.

It is found in the cell membrane. Its function is as follows. Involved in heme (porphyrin) scavenging. Binds Fe(2+) and Fe(3+) heme but the largest fraction is Fe(2+) heme. Functions as a high-affinity heme binding protein and probably has a role in relaying heme-iron from cell wall-anchored isd proteins receptors to the probable permease IsdF. The protein is High-affinity heme uptake system protein IsdE (isdE) of Staphylococcus aureus (strain Mu3 / ATCC 700698).